The chain runs to 368 residues: 2-oxoglutarate-dependent dioxygenase frbJ (368 aa).

The Fe2OG dioxygenase domain occupies 171–277; sequence QQHKLKIVKY…RYSIPFFQGV (107 aa). Residues His198, Asp200, and His256 each coordinate Fe cation. Position 268 (Arg268) interacts with 2-oxoglutarate.

It belongs to the iron/ascorbate-dependent oxidoreductase family.

The protein operates within antifungal biosynthesis. Its function is as follows. 2-oxoglutarate-dependent dioxygenase; part of the gene cluster that mediates the biosynthesis of the antifungal antibiotic FR901469, an inhibitor of beta-1,3-glucansynthase, exerting antifungal activity against the pathogenes Candida albicans and Aspergillus fumigatus. FR901469 is a cyclic depsipeptide containing 12 amino acid residues and a fatty acid chain. The NRPS frbI contains 12 modules responsible for the formation of the depsipeptide backbone which is denoted as Acyl-Thr-Ala-Tyr-Val-4OHPro-Thr-Thr-3OHPro-threo3OHGln-Gly-Thr-Orn-OH (C71H116N14O23). The PKS frbB is probably involved in the production of the hydrocarbon chain, and the acyl-CoA ligase frbC might be involved in the transport of the chain to the peptide ptoduct of frbI. Because FR901469 contains 3 hydroxylated amino acid residues, the 3 oxygenases frbA, frbH, and frbJ might be participating in amino acid hydroxylation. As no thioesterase domains were detected in frbI or frbB, the thioesterases frbD and frbE may instead release and cyclize the products of the NRPS and PKS, respectively. This chain is 2-oxoglutarate-dependent dioxygenase frbJ, found in Dothideomycetidae sp. (strain 11243) (Fungal sp. (strain No.11243)).